We begin with the raw amino-acid sequence, 212 residues long: Riboflavin kinase (212 aa).

An H-T-H motif-like region spans residues 1 to 87 (MKKSNLDLLI…HEELSDALYR (87 aa)). The riboflavin kinase stretch occupies residues 88–212 (GIIIGEVVSG…DGDRIRIKTL (125 aa)). Residue 97–102 (GIGEGA) coordinates CDP. Mg(2+)-binding residues include Thr124 and Asn126. Residues Thr180 and Glu188 each contribute to the FMN site. Residue 193–196 (VNLR) coordinates CDP.

This sequence belongs to the archaeal riboflavin kinase family. Requires Mg(2+) as cofactor.

It catalyses the reaction riboflavin + CTP = CDP + FMN + H(+). It participates in cofactor biosynthesis; FMN biosynthesis; FMN from riboflavin (CTP route): step 1/1. Functionally, catalyzes the CTP-dependent phosphorylation of riboflavin (vitamin B2) to form flavin mononucleotide (FMN). This is Riboflavin kinase (ribK) from Pyrococcus furiosus (strain ATCC 43587 / DSM 3638 / JCM 8422 / Vc1).